The sequence spans 159 residues: Protein SPA, chloroplastic (159 aa).

The N-terminal 47 residues, 1–47 (MLTAPSLSRFKSPFISSPLKLPTLSSSFFTQKFHQTCRRRNSYPCIK), are a transit peptide targeting the chloroplast. A helical transmembrane segment spans residues 56–76 (VIAITVGVLSVAIGVGIPVFY). The segment at 85 to 145 (KRENTQPCFP…TCTTCQGSGI (61 aa)) is CR-type-like. CXXCXGXG motif repeat units follow at residues 92–99 (CFPCTGTG), 103–110 (CRFCMGTG), 126–133 (CINCDGAG), and 137–144 (CTTCQGSG).

Expressed in source leaves. Lower levels of expression in fruits and stems.

The protein resides in the plastid. It localises to the chloroplast thylakoid membrane. Participates in determining harvest index (HI) by affecting source-sink carbon distribution. Up-regulates the conversion of fixed carbon to exportable sugars. This is Protein SPA, chloroplastic from Solanum lycopersicum (Tomato).